The primary structure comprises 116 residues: Large ribosomal subunit protein bL19 (116 aa).

The protein belongs to the bacterial ribosomal protein bL19 family.

Its function is as follows. This protein is located at the 30S-50S ribosomal subunit interface and may play a role in the structure and function of the aminoacyl-tRNA binding site. The sequence is that of Large ribosomal subunit protein bL19 from Roseiflexus castenholzii (strain DSM 13941 / HLO8).